Here is a 90-residue protein sequence, read N- to C-terminus: Barrier-to-autointegration factor A (90 aa).

The protein belongs to the BAF family. As to quaternary structure, homodimer. Interacts with nemp1a and nemp1b. Phosphorylated during S and M phases.

It is found in the nucleus. The protein localises to the chromosome. Its subcellular location is the nucleus envelope. It localises to the cytoplasm. Its function is as follows. Non-specific DNA-binding protein that plays key roles in mitotic nuclear reassembly, chromatin organization, DNA damage response, gene expression and intrinsic immunity against foreign DNA. Contains two non-specific double-stranded DNA (dsDNA)-binding sites which promote DNA cross-bridging. Plays a key role in nuclear membrane reformation at the end of mitosis by driving formation of a single nucleus in a spindle-independent manner. Transiently cross-bridges anaphase chromosomes via its ability to bridge distant DNA sites, leading to the formation of a dense chromatin network at the chromosome ensemble surface that limits membranes to the surface. Also acts as a negative regulator of innate immune activation by restricting CGAS activity toward self-DNA upon acute loss of nuclear membrane integrity. Outcompetes CGAS for DNA-binding, thereby preventing CGAS activation and subsequent damaging autoinflammatory responses. Also involved in DNA damage response; acts by inhibiting the ADP-ribosyltransferase activity of PARP1. Involved in the recognition of exogenous dsDNA in the cytosol: associates with exogenous dsDNA immediately after its appearance in the cytosol at endosome breakdown and is required to avoid autophagy. The protein is Barrier-to-autointegration factor A (banf1-a) of Xenopus laevis (African clawed frog).